Consider the following 596-residue polypeptide: NADH-quinone oxidoreductase subunit C/D (596 aa).

Residues 1-186 (MTDLTAQDAA…DPFELTKAKQ (186 aa)) form an NADH dehydrogenase I subunit C region. Positions 210 to 596 (DFMFLNLGPN…IDFVMSDVDR (387 aa)) are NADH dehydrogenase I subunit D.

It in the N-terminal section; belongs to the complex I 30 kDa subunit family. The protein in the C-terminal section; belongs to the complex I 49 kDa subunit family. As to quaternary structure, NDH-1 is composed of 13 different subunits. Subunits NuoB, CD, E, F, and G constitute the peripheral sector of the complex.

The protein resides in the cell inner membrane. The enzyme catalyses a quinone + NADH + 5 H(+)(in) = a quinol + NAD(+) + 4 H(+)(out). Functionally, NDH-1 shuttles electrons from NADH, via FMN and iron-sulfur (Fe-S) centers, to quinones in the respiratory chain. The immediate electron acceptor for the enzyme in this species is believed to be ubiquinone. Couples the redox reaction to proton translocation (for every two electrons transferred, four hydrogen ions are translocated across the cytoplasmic membrane), and thus conserves the redox energy in a proton gradient. The protein is NADH-quinone oxidoreductase subunit C/D of Salmonella dublin (strain CT_02021853).